We begin with the raw amino-acid sequence, 279 residues long: Odontogenic ameloblast-associated protein (279 aa).

An N-terminal signal peptide occupies residues 1-15 (MKIIILLGFLGATLS). O-linked (GalNAc...) threonine glycans are attached at residues threonine 115 and threonine 119. The segment at 127–129 (MPY) is interaction with ARHGEF5. Residues 243–263 (STSPKPSTTNVFTSAVDQTIT) show a composition bias toward polar residues. Positions 243–279 (STSPKPSTTNVFTSAVDQTITPELPEEKDKTDSLREP) are disordered. The O-linked (GalNAc...) threonine glycan is linked to threonine 244. Serine 249 is a glycosylation site (O-linked (GalNAc...) serine). O-linked (GalNAc...) threonine glycosylation is found at threonine 250, threonine 251, and threonine 255. An O-linked (GalNAc...) serine glycan is attached at serine 256. O-linked (GalNAc...) threonine glycosylation is found at threonine 261, threonine 263, and threonine 273. Positions 267-279 (PEEKDKTDSLREP) are enriched in basic and acidic residues. Residue serine 275 is glycosylated (O-linked (GalNAc...) serine).

Belongs to the ODAM family. As to quaternary structure, interacts (via C-terminus) with ARHGEF5. Post-translationally, O-glycosylated. As to expression, expressed in the junctional epithelium of healthy teeth. In periodontitis, absent in the pocket epithelium of the diseased periodontium but is detected in the gingival crevicular fluid.

The protein localises to the secreted. The protein resides in the cytoplasm. Its subcellular location is the nucleus. Functionally, tooth-associated epithelia protein that probably plays a role in odontogenesis, the complex process that results in the initiation and generation of the tooth. May be incorporated in the enamel matrix at the end of mineralization process. Involved in the induction of RHOA activity via interaction with ARHGEF and expression of downstream factors such as ROCK. Plays a role in attachment of the junctional epithelium to the tooth surface. The protein is Odontogenic ameloblast-associated protein (ODAM) of Homo sapiens (Human).